A 91-amino-acid chain; its full sequence is Small integral membrane protein 12-A (91 aa).

Residues 12–34 (YAPYITFPVAFVVGAVGYQLEWF) traverse the membrane as a helical segment.

Belongs to the SMIM12 family.

It localises to the membrane. This Xenopus laevis (African clawed frog) protein is Small integral membrane protein 12-A (smim12-a).